Consider the following 327-residue polypeptide: Cytochrome f (327 aa).

A signal peptide spans 1-24 (MKRIYLALCALLLLLGTGSRPAAA). Residues tyrosine 25, cysteine 45, cysteine 48, and histidine 49 each contribute to the heme site. Residues 293–313 (VKWLVAFLAAVAITQLLLVLK) form a helical membrane-spanning segment.

The protein belongs to the cytochrome f family. As to quaternary structure, the 4 large subunits of the cytochrome b6-f complex are cytochrome b6, subunit IV (17 kDa polypeptide, PetD), cytochrome f and the Rieske protein, while the 4 small subunits are PetG, PetL, PetM and PetN. The complex functions as a dimer. Heme is required as a cofactor.

It is found in the cellular thylakoid membrane. In terms of biological role, component of the cytochrome b6-f complex, which mediates electron transfer between photosystem II (PSII) and photosystem I (PSI), cyclic electron flow around PSI, and state transitions. The protein is Cytochrome f of Synechococcus sp. (strain JA-3-3Ab) (Cyanobacteria bacterium Yellowstone A-Prime).